The primary structure comprises 772 residues: MLSLKKYFTEGLIQFTILLSLIGVRVDVDTYLNSQLPPLREIILGQSSAYTQTQFHNLRNTLDGYGIHPKSVDLDYYFTARRLLNQVRALDRFQVPTTEVSAWLVHRDPDGSVSGTQPSAGIALENSGGLQDGTGPDGAVRESGAEQGFGEELEDLGAVAAPVNGDLTKEDIDLIDILWRQDIDLGAGREIFDYSHRQKESEVDKELSDGRERGDGWRSAGGQVTNRNLLVDGETGESFPAQVPGVEDQTALSLEECLRLLEATFPFGENSEFPAADVSTLSEAVPSESRPAGIQSSLLSPLLPETESPFDLEQQWQDLMSIMEMQAMEVNNTTAETLYNGTSGDLLTSNYNLAPNTPINQNVSLHQASLGSCSQDFSLFSSEIESPSMGGSSALLQLAPDNSTGLNTTFSSTNFSGIFFPPQLNSTVNETAGPELPDPLGGLLDEAMLDEISLMDLAIEEGFNPVQASQLEEEFDSDSGLSLDSGHSPASLSSSEASSSSSSSSSSSSSSSSSSSSFSEEGAVGYSSDSENVDFEEAEGAVGYQPEYSKFCRMSYQDPSQLHYLPYLEHVGHNHTYNMAPGTLDPEEPKLPSVGKKSSKEKPSEFLDKQMSRDEHRARAMKIPFTNDKIINLPVEEFNELLSKYQLSEAQLSLIRDIRRRGKNKMAAQNCRKRKLDTILNLERDVEDLQRDKSKLLREKVEFLKSIRQMKQKVQNLYQEVFGRLRDENGQPYSPNQYALQYASDGSVILIPRTLADQQARRQERKQKDRRK.

The chain crosses the membrane as a helical; Signal-anchor for type II membrane protein span at residues 7 to 24; it reads YFTEGLIQFTILLSLIGV. The segment at 191 to 199 is cholesterol recognition/amino acid consensus (CRAC) region; it reads IFDYSHRQK. A compositionally biased stretch (basic and acidic residues) spans 198–216; it reads QKESEVDKELSDGRERGDG. Positions 198 to 223 are disordered; the sequence is QKESEVDKELSDGRERGDGWRSAGGQ. 8 N-linked (GlcNAc...) asparagine glycosylation sites follow: N332, N340, N362, N402, N407, N414, N425, and N429. A disordered region spans residues 472–531; sequence EEEFDSDSGLSLDSGHSPASLSSSEASSSSSSSSSSSSSSSSSSSSFSEEGAVGYSSDSE. Over residues 478–519 the composition is skewed to low complexity; sequence DSGLSLDSGHSPASLSSSEASSSSSSSSSSSSSSSSSSSSFS. The N-linked (GlcNAc...) asparagine glycan is linked to N574. The tract at residues 581–613 is disordered; the sequence is PGTLDPEEPKLPSVGKKSSKEKPSEFLDKQMSR. Residues 598 to 613 show a composition bias toward basic and acidic residues; the sequence is SSKEKPSEFLDKQMSR. Positions 654-717 constitute a bZIP domain; it reads LIRDIRRRGK…RQMKQKVQNL (64 aa). Residues 656 to 675 form a basic motif region; it reads RDIRRRGKNKMAAQNCRKRK. The tract at residues 682 to 696 is leucine-zipper; sequence LERDVEDLQRDKSKL. The short motif at 761-768 is the Nuclear localization signal element; sequence RRQERKQK.

Belongs to the bZIP family. CNC subfamily. Interacts (via the bZIP domain) with small MAF protein (MAFF, MAFG or MAFK); required for binding to antioxidant response elements (AREs) on DNA. Cleaved at Leu-104 following retrotranslocation, releasing the protein from the endoplasmic reticulum membrane and forming the transcription factor NRF1 that translocates into the nucleus.

Its subcellular location is the endoplasmic reticulum membrane. It localises to the nucleus. Functionally, endoplasmic reticulum membrane sensor that translocates into the nucleus in response to various stresses to act as a transcription factor. Constitutes a precursor of the transcription factor NRF1. Able to detect various cellular stresses, such as cholesterol excess, oxidative stress or proteasome inhibition. In response to stress, it is released from the endoplasmic reticulum membrane following cleavage and translocates into the nucleus to form the transcription factor NRF1. Acts as a key sensor of cholesterol excess: in excess cholesterol conditions, the endoplasmic reticulum membrane form of the protein directly binds cholesterol via its CRAC motif, preventing cleavage and release of the transcription factor NRF1, thereby allowing expression of genes promoting cholesterol removal. Involved in proteasome homeostasis: in response to proteasome inhibition, it is released from the endoplasmic reticulum membrane, translocates to the nucleus and activates expression of genes encoding proteasome subunits. CNC-type bZIP family transcription factor that translocates to the nucleus and regulates expression of target genes in response to various stresses. Heterodimerizes with small-Maf proteins (MAFF, MAFG or MAFK) and binds DNA motifs including the antioxidant response elements (AREs), which regulate expression of genes involved in oxidative stress response. Activates or represses expression of target genes, depending on the context. Plays a key role in cholesterol homeostasis by acting as a sensor of cholesterol excess: in low cholesterol conditions, translocates into the nucleus and represses expression of genes involved in defense against cholesterol excess. In excess cholesterol conditions, the endoplasmic reticulum membrane form of the protein directly binds cholesterol via its CRAC motif, preventing cleavage and release of the transcription factor NRF1, thereby allowing expression of genes promoting cholesterol removal. Critical for redox balance in response to oxidative stress: acts by binding the AREs motifs on promoters and mediating activation of oxidative stress response genes. Involved in proteasome homeostasis: in response to proteasome inhibition, mediates the 'bounce-back' of proteasome subunits by translocating into the nucleus and activating expression of genes encoding proteasome subunits. This Gallus gallus (Chicken) protein is Endoplasmic reticulum membrane sensor NFE2L1.